The sequence spans 124 residues: Large ribosomal subunit protein uL18 (124 aa).

Belongs to the universal ribosomal protein uL18 family. As to quaternary structure, part of the 50S ribosomal subunit; part of the 5S rRNA/L5/L18/L25 subcomplex. Contacts the 5S and 23S rRNAs.

Functionally, this is one of the proteins that bind and probably mediate the attachment of the 5S RNA into the large ribosomal subunit, where it forms part of the central protuberance. This chain is Large ribosomal subunit protein uL18, found in Parafrankia sp. (strain EAN1pec).